The following is a 186-amino-acid chain: UPF0398 protein LBUL_0921 (186 aa).

It belongs to the UPF0398 family.

The polypeptide is UPF0398 protein LBUL_0921 (Lactobacillus delbrueckii subsp. bulgaricus (strain ATCC BAA-365 / Lb-18)).